A 468-amino-acid chain; its full sequence is Chromosomal replication initiator protein DnaA (468 aa).

Residues 1–84 (MSSSLWLQCL…RFEVGSRPVS (84 aa)) form a domain I, interacts with DnaA modulators region. Positions 80–106 (SRPVSAPKPAPTRTPADVAAESSAPAQ) are disordered. Positions 84-131 (SAPKPAPTRTPADVAAESSAPAQLQARKPVHKTWDDDPQAIAAINHRS) are domain II. A domain III, AAA+ region region spans residues 132-348 (NMNPKHKFDN…GALNRVIANA (217 aa)). The ATP site is built by Gly-176, Gly-178, Lys-179, and Thr-180. A domain IV, binds dsDNA region spans residues 349–468 (NFTGRPITID…YSNLIRTLSS (120 aa)).

The protein belongs to the DnaA family. In terms of assembly, oligomerizes as a right-handed, spiral filament on DNA at oriC.

The protein resides in the cytoplasm. Its function is as follows. Plays an essential role in the initiation and regulation of chromosomal replication. ATP-DnaA binds to the origin of replication (oriC) to initiate formation of the DNA replication initiation complex once per cell cycle. Binds the DnaA box (a 9 base pair repeat at the origin) and separates the double-stranded (ds)DNA. Forms a right-handed helical filament on oriC DNA; dsDNA binds to the exterior of the filament while single-stranded (ss)DNA is stabiized in the filament's interior. The ATP-DnaA-oriC complex binds and stabilizes one strand of the AT-rich DNA unwinding element (DUE), permitting loading of DNA polymerase. After initiation quickly degrades to an ADP-DnaA complex that is not apt for DNA replication. Binds acidic phospholipids. The chain is Chromosomal replication initiator protein DnaA from Vibrio parahaemolyticus serotype O3:K6 (strain RIMD 2210633).